A 349-amino-acid polypeptide reads, in one-letter code: Sexual stage-specific protein G37 (349 aa).

The N-terminal stretch at 1-18 (MKLYLVTFLFFVIYKNKT) is a signal peptide. The Extracellular portion of the chain corresponds to 19-91 (FVDCVTKKQD…INQVSNNIMR (73 aa)). Residues 92-112 (VYISLLSLFLFPYFSYIGIFG) form a helical membrane-spanning segment. The Cytoplasmic segment spans residues 113 to 117 (HSRNK). A helical transmembrane segment spans residues 118–138 (ANLTLSSLLAYFALLVSFFLF). The Extracellular segment spans residues 139-140 (NG). Residues 141-161 (ILNIGFVTSLPLVVAVLIFIL) form a helical membrane-spanning segment. Residues 162–176 (GVSDCEINFLYKYTR) lie on the Cytoplasmic side of the membrane. Residues 177–197 (YIFCFIISKLIYDVVTYISKD) traverse the membrane as a helical segment. Residues 198–218 (GANIFDYGFSGHIYMNLLRGK) are Extracellular-facing. A helical transmembrane segment spans residues 219–239 (YYIVLKLIHLIILSLISLIII). Residues 240-262 (KICPKIFSNNHLKSPISITFDKY) are Cytoplasmic-facing. A helical transmembrane segment spans residues 263-283 (IISFLCSLPIATAISQVFYLL). Residues 284–305 (SKTINPIDPSIFFMIPSSINFS) lie on the Extracellular side of the membrane. A helical membrane pass occupies residues 306-326 (STGTIFSLSIWILMSYLMTFL). The Cytoplasmic segment spans residues 327–349 (RNKVEADFNNILNKIPNNLPDFI).

It localises to the cell membrane. In terms of biological role, involved in the development of male gametocytes. This Plasmodium berghei (strain Anka) protein is Sexual stage-specific protein G37.